We begin with the raw amino-acid sequence, 161 residues long: Phosphopantetheine adenylyltransferase (161 aa).

Threonine 10 lines the substrate pocket. ATP contacts are provided by residues 10-11 (TF) and histidine 18. Substrate is bound by residues lysine 42, methionine 74, and arginine 88. Residues 89 to 91 (GLR), glutamate 99, and 124 to 130 (WSFISSS) each bind ATP.

The protein belongs to the bacterial CoaD family. Homohexamer. Mg(2+) serves as cofactor.

It localises to the cytoplasm. It catalyses the reaction (R)-4'-phosphopantetheine + ATP + H(+) = 3'-dephospho-CoA + diphosphate. The protein operates within cofactor biosynthesis; coenzyme A biosynthesis; CoA from (R)-pantothenate: step 4/5. In terms of biological role, reversibly transfers an adenylyl group from ATP to 4'-phosphopantetheine, yielding dephospho-CoA (dPCoA) and pyrophosphate. The sequence is that of Phosphopantetheine adenylyltransferase from Serratia marcescens.